A 194-amino-acid polypeptide reads, in one-letter code: Imidazoleglycerol-phosphate dehydratase (194 aa).

The protein belongs to the imidazoleglycerol-phosphate dehydratase family.

It localises to the cytoplasm. The enzyme catalyses D-erythro-1-(imidazol-4-yl)glycerol 3-phosphate = 3-(imidazol-4-yl)-2-oxopropyl phosphate + H2O. It functions in the pathway amino-acid biosynthesis; L-histidine biosynthesis; L-histidine from 5-phospho-alpha-D-ribose 1-diphosphate: step 6/9. In Chlorobaculum parvum (strain DSM 263 / NCIMB 8327) (Chlorobium vibrioforme subsp. thiosulfatophilum), this protein is Imidazoleglycerol-phosphate dehydratase.